The sequence spans 575 residues: Isocitrate dehydrogenase kinase/phosphatase (575 aa).

ATP contacts are provided by residues A315–M321 and K336. D371 is an active-site residue.

It belongs to the AceK family.

It localises to the cytoplasm. It catalyses the reaction L-seryl-[isocitrate dehydrogenase] + ATP = O-phospho-L-seryl-[isocitrate dehydrogenase] + ADP + H(+). Its function is as follows. Bifunctional enzyme which can phosphorylate or dephosphorylate isocitrate dehydrogenase (IDH) on a specific serine residue. This is a regulatory mechanism which enables bacteria to bypass the Krebs cycle via the glyoxylate shunt in response to the source of carbon. When bacteria are grown on glucose, IDH is fully active and unphosphorylated, but when grown on acetate or ethanol, the activity of IDH declines drastically concomitant with its phosphorylation. This Yersinia enterocolitica serotype O:8 / biotype 1B (strain NCTC 13174 / 8081) protein is Isocitrate dehydrogenase kinase/phosphatase.